Reading from the N-terminus, the 273-residue chain is Putative pyruvate, phosphate dikinase regulatory protein (273 aa).

153–160 (GISRTSKT) is a binding site for ADP.

It belongs to the pyruvate, phosphate/water dikinase regulatory protein family. PDRP subfamily.

The enzyme catalyses N(tele)-phospho-L-histidyl/L-threonyl-[pyruvate, phosphate dikinase] + ADP = N(tele)-phospho-L-histidyl/O-phospho-L-threonyl-[pyruvate, phosphate dikinase] + AMP + H(+). It catalyses the reaction N(tele)-phospho-L-histidyl/O-phospho-L-threonyl-[pyruvate, phosphate dikinase] + phosphate + H(+) = N(tele)-phospho-L-histidyl/L-threonyl-[pyruvate, phosphate dikinase] + diphosphate. Bifunctional serine/threonine kinase and phosphorylase involved in the regulation of the pyruvate, phosphate dikinase (PPDK) by catalyzing its phosphorylation/dephosphorylation. In Agrobacterium fabrum (strain C58 / ATCC 33970) (Agrobacterium tumefaciens (strain C58)), this protein is Putative pyruvate, phosphate dikinase regulatory protein.